An 82-amino-acid polypeptide reads, in one-letter code: Cytotoxin homolog Clbp-3 (82 aa).

An N-terminal signal peptide occupies residues 1-21 (MKTLLLTLVVVTIVCLDLGYT). 4 disulfide bridges follow: Cys-24/Cys-43, Cys-36/Cys-60, Cys-64/Cys-75, and Cys-76/Cys-81.

This sequence belongs to the three-finger toxin family. Short-chain subfamily. Orphan group XV sub-subfamily. As to expression, expressed by the venom gland.

The protein localises to the secreted. Its subcellular location is the target cell membrane. Has low cytotoxic activity. The sequence is that of Cytotoxin homolog Clbp-3 from Naja atra (Chinese cobra).